We begin with the raw amino-acid sequence, 642 residues long: Extracellular metalloproteinase 4 (642 aa).

A signal peptide spans Met1–Ala18. The propeptide occupies His19–Ala253. A compositionally biased stretch (polar residues) spans Ser49–Phe60. The tract at residues Ser49–Gly72 is disordered. Low complexity predominate over residues Thr61–Ser71. Residue Asn419 is glycosylated (N-linked (GlcNAc...) asparagine). His436 is a binding site for Zn(2+). The active site involves Glu437. Residue His440 participates in Zn(2+) binding. N-linked (GlcNAc...) asparagine glycosylation is found at Asn509 and Asn602.

The protein belongs to the peptidase M36 family. Zn(2+) is required as a cofactor.

It is found in the secreted. Its function is as follows. Secreted metalloproteinase that allows assimilation of proteinaceous substrates and probably acts as a virulence factor. This chain is Extracellular metalloproteinase 4 (MEP4), found in Arthroderma gypseum (strain ATCC MYA-4604 / CBS 118893) (Microsporum gypseum).